Reading from the N-terminus, the 381-residue chain is Prostatic acid phosphatase (381 aa).

The N-terminal stretch at 1-31 is a signal peptide; that stretch reads MRAVPLPLSRTASLSLGFLLLLSLCLDPGQA. Arg-42 is a binding site for substrate. Residue His-43 is the Nucleophile of the active site. Arg-46 provides a ligand contact to substrate. The N-linked (GlcNAc...) asparagine glycan is linked to Asn-93. A substrate-binding site is contributed by Arg-110. 3 disulfides stabilise this stretch: Cys-160–Cys-371, Cys-214–Cys-312, and Cys-346–Cys-350. N-linked (GlcNAc...) asparagine glycosylation occurs at Asn-219. Residue His-288 participates in substrate binding. The Proton donor role is filled by Asp-289. Residue Asn-332 is glycosylated (N-linked (GlcNAc...) asparagine).

It belongs to the histidine acid phosphatase family. Homodimer; dimer formation is required for phosphatase activity. As to expression, expressed in salivary gland, thymus and thyroid gland. In terms of tissue distribution, widely expressed in prostate lobes, brain, kidney, liver, lung, muscle, placenta, salivary gland, spleen, thyroid and thymus. Locates to Schwann cells and fibroblasts. Expressed in peptidergic and non-peptidergic nociceptive (pain-sensing) neurons. Preferentially expressed in non-peptidergic doral root ganglia neurons.

Its subcellular location is the secreted. It is found in the cell membrane. The protein localises to the lysosome membrane. The catalysed reaction is a phosphate monoester + H2O = an alcohol + phosphate. The enzyme catalyses a ribonucleoside 5'-phosphate + H2O = a ribonucleoside + phosphate. It carries out the reaction 1-(9Z-octadecenoyl)-sn-glycero-3-phosphate + H2O = 1-(9Z-octadecenoyl)-sn-glycerol + phosphate. It catalyses the reaction O-phospho-L-tyrosyl-[protein] + H2O = L-tyrosyl-[protein] + phosphate. A non-specific tyrosine phosphatase that dephosphorylates a diverse number of substrates under acidic conditions (pH 4-6) including alkyl, aryl, and acyl orthophosphate monoesters and phosphorylated proteins. Has lipid phosphatase activity and inactivates lysophosphatidic acid in seminal plasma. Its function is as follows. In addition to its tyrosine phosphatase activity, also has ecto-5'-nucleotidase activity in dorsal root ganglion (DRG) neurons. Generates adenosine from AMP. This extracellular adenosine leads to a decrease in chronic pain by activating A1R in nociceptive neurons. The chain is Prostatic acid phosphatase (Acp3) from Mus musculus (Mouse).